Reading from the N-terminus, the 132-residue chain is MSMTDNVADMLTRIRNAYKSKLINVSFPSSKIKTSILDVLQKEGYIKDYVTTQKNNISYTEVALKYSVNGDASICEIHRVSKPGKRVYSAIKDLKGYYNNMGIYILSTPYGVMSDREAHIKNVGGEVICKVF.

It belongs to the universal ribosomal protein uS8 family. Part of the 30S ribosomal subunit. Contacts proteins S5 and S12.

One of the primary rRNA binding proteins, it binds directly to 16S rRNA central domain where it helps coordinate assembly of the platform of the 30S subunit. The polypeptide is Small ribosomal subunit protein uS8 (Rickettsia felis (strain ATCC VR-1525 / URRWXCal2) (Rickettsia azadi)).